The primary structure comprises 136 residues: Cytokine-like protein 1 (136 aa).

The first 22 residues, 1–22 (MRTPGPLPVLLLLLAGAPAARP), serve as a signal peptide directing secretion.

In terms of tissue distribution, specifically expressed in CD34+ hematopoietic cells.

It localises to the secreted. This is Cytokine-like protein 1 (CYTL1) from Homo sapiens (Human).